Consider the following 498-residue polypeptide: UDP-N-acetylmuramate--L-alanine ligase (498 aa).

Position 122–128 (122–128 (GTHGKTS)) interacts with ATP.

The protein belongs to the MurCDEF family.

It is found in the cytoplasm. It catalyses the reaction UDP-N-acetyl-alpha-D-muramate + L-alanine + ATP = UDP-N-acetyl-alpha-D-muramoyl-L-alanine + ADP + phosphate + H(+). Its pathway is cell wall biogenesis; peptidoglycan biosynthesis. Cell wall formation. The polypeptide is UDP-N-acetylmuramate--L-alanine ligase (Corynebacterium jeikeium (strain K411)).